Consider the following 154-residue polypeptide: uncharacterized protein (154 aa).

The HTH marR-type domain occupies 14-146; that stretch reads AMNLYRVFAR…LIVLLKKAGI (133 aa). The H-T-H motif DNA-binding region spans 60–83; that stretch reads LQQIGSRLLLVSGNVTYVIDKLER.

This is an uncharacterized protein from Bacillus subtilis (strain 168).